An 89-amino-acid chain; its full sequence is Small ribosomal subunit protein uS15 (89 aa).

It belongs to the universal ribosomal protein uS15 family. As to quaternary structure, part of the 30S ribosomal subunit. Forms a bridge to the 50S subunit in the 70S ribosome, contacting the 23S rRNA.

Functionally, one of the primary rRNA binding proteins, it binds directly to 16S rRNA where it helps nucleate assembly of the platform of the 30S subunit by binding and bridging several RNA helices of the 16S rRNA. Forms an intersubunit bridge (bridge B4) with the 23S rRNA of the 50S subunit in the ribosome. The chain is Small ribosomal subunit protein uS15 from Sodalis glossinidius (strain morsitans).